The sequence spans 333 residues: MKGIRLCGSGAAVPRLRISNDDLSGRVETSDEWIRTRTGIAARRVADESESLTSLAAAAGKQALERAGWDASSVDLILLATSSPDDLFGSAPKVQALIGAGSAVAFDLTAACSGFLFSLVTAAQYLRTGAMTRALVIGADQLSRWVDWDDRRSCVLFGDGAGAVAIEACPAENDGLLGFRLNSDGARGDCLTLAQTSERAELLPGMSHQRGGYAPIGMNGQEVYKFAVREVPAILKQLLADTNTEPASIDWLLLHQANQRILDAAAERLGIAADKVLSNLANYGNTSAGTIPLMLHEAVSDGRIQSGQLIASSGFGAGLSWGAALLRWDGPTS.

Residues cysteine 112 and histidine 255 contribute to the active site. The interval glutamine 256–arginine 260 is ACP-binding. Asparagine 285 is an active-site residue.

Belongs to the thiolase-like superfamily. FabH family. As to quaternary structure, homodimer.

Its subcellular location is the cytoplasm. The enzyme catalyses malonyl-[ACP] + acetyl-CoA + H(+) = 3-oxobutanoyl-[ACP] + CO2 + CoA. The protein operates within lipid metabolism; fatty acid biosynthesis. Its function is as follows. Catalyzes the condensation reaction of fatty acid synthesis by the addition to an acyl acceptor of two carbons from malonyl-ACP. Catalyzes the first condensation reaction which initiates fatty acid synthesis and may therefore play a role in governing the total rate of fatty acid production. Possesses both acetoacetyl-ACP synthase and acetyl transacylase activities. Its substrate specificity determines the biosynthesis of branched-chain and/or straight-chain of fatty acids. The protein is Beta-ketoacyl-[acyl-carrier-protein] synthase III of Synechococcus sp. (strain RCC307).